A 295-amino-acid polypeptide reads, in one-letter code: MTVTGRFAPSPTGAMHLGNARTALLAWLHSRALGGRHLLRFEDLDTGRVRGWAYDLTRRDLEWLGLDWDEEFRQSERLDLYAAALAGLDTYPCTCTRKEVLAAIADSAGAPHGEEAVYPGTCRPGSVHPERPAARRWRVPEAESCVTDALSGDTLCQWLPRDVGDFVLQRNDGVYAYHLAVVVDDALMGVTDVLRGADLWTASPRQAALHRALGFTPPRFLHVPLLSNYRGERLAKRGGAPPLSEWREHGEAPGRVLADLAHTLPWPGFQAVPEEVTAPELLPLWGDVLAERPGT.

Residues 6–10 and E42 each bind L-glutamate; that span reads RFAPS. Positions 9–19 match the 'HIGH' region motif; that stretch reads PSPTGAMHLGN. 4 residues coordinate Zn(2+): C93, C95, Y118, and C122. Residues Y177 and R195 each contribute to the L-glutamate site. A 'KMSKS' region motif is present at residues 233-237; that stretch reads RLAKR. ATP is bound at residue K236.

It belongs to the class-I aminoacyl-tRNA synthetase family. GluQ subfamily. Zn(2+) is required as a cofactor.

Functionally, catalyzes the tRNA-independent activation of glutamate in presence of ATP and the subsequent transfer of glutamate onto a tRNA(Asp). Glutamate is transferred on the 2-amino-5-(4,5-dihydroxy-2-cyclopenten-1-yl) moiety of the queuosine in the wobble position of the QUC anticodon. This Deinococcus radiodurans (strain ATCC 13939 / DSM 20539 / JCM 16871 / CCUG 27074 / LMG 4051 / NBRC 15346 / NCIMB 9279 / VKM B-1422 / R1) protein is Glutamyl-Q tRNA(Asp) synthetase.